A 177-amino-acid polypeptide reads, in one-letter code: Large ribosomal subunit protein uL10 (177 aa).

This sequence belongs to the universal ribosomal protein uL10 family. In terms of assembly, part of the ribosomal stalk of the 50S ribosomal subunit. The N-terminus interacts with L11 and the large rRNA to form the base of the stalk. The C-terminus forms an elongated spine to which L12 dimers bind in a sequential fashion forming a multimeric L10(L12)X complex.

Its function is as follows. Forms part of the ribosomal stalk, playing a central role in the interaction of the ribosome with GTP-bound translation factors. This is Large ribosomal subunit protein uL10 from Leptospira borgpetersenii serovar Hardjo-bovis (strain JB197).